A 111-amino-acid polypeptide reads, in one-letter code: Ig kappa chain V-III region PC 7175 (111 aa).

A framework-1 region spans residues 1–23 (DIVLTQSPASLAVSLGQRATISC). Cys-23 and Cys-92 are oxidised to a cystine. Residues 24-38 (RASKSVSTSGYSYMH) are complementarity-determining-1. The segment at 39 to 53 (WYQQKPGQPPKLLIY) is framework-2. The complementarity-determining-2 stretch occupies residues 54 to 60 (LASNLES). The segment at 61-92 (GVPARFSGSGSGTDFTLNIHPVEEEDAATYYC) is framework-3. Positions 93 to 101 (QHSRELPLT) are complementarity-determining-3. The framework-4 stretch occupies residues 102 to 111 (FGAGTKLELK).

The sequence is that of Ig kappa chain V-III region PC 7175 from Mus musculus (Mouse).